Reading from the N-terminus, the 323-residue chain is 2-methylene-furan-3-one reductase (323 aa).

Residues K59, 174–175, 197–200, Y216, I254, 265–267, and 312–313 contribute to the NADP(+) site; these read GV, STKK, FVL, and RA. K59 contacts substrate.

This sequence belongs to the zinc-containing alcohol dehydrogenase family. Quinone oxidoreductase subfamily. In terms of assembly, monomer. The N-terminus is blocked. Expressed in parenchyma tissues of red fruits. Not found in vascular tissues. Also detected in the achenes.

It catalyses the reaction 4-hydroxy-2,5-dimethyl-furan-3(2H)-one + NADP(+) = 4-hydroxy-5-methyl-2-methylenefuran-3(2H)-one + NADPH + H(+). Enone oxidoreductase involved in the biosynthesis of 4-hydroxy-2,5-dimethyl-3(2H)-furanone (HDMF or furaneol), the key flavor compound in strawberries. Can use both NADH and NADPH as the electron donor. The sequence is that of 2-methylene-furan-3-one reductase (EO) from Fragaria ananassa (Strawberry).